A 128-amino-acid chain; its full sequence is Entry-fusion complex protein OPG094 (128 aa).

Over 1 to 30 (MENVPNVYFNPVFIEPTFKHSLLSVYKHRL) the chain is Intravirion. A helical; Signal-anchor for type III membrane protein transmembrane segment spans residues 31-51 (IVLFEVFIVFILIYVFFRSEL). Residues 52 to 107 (NMFFMPKRKIPDPIDRLRRANLACEDDKLMIYGLPWMTTQTSALSINSKPIVYKDC) lie on the Virion surface side of the membrane. A disulfide bond links Cys75 and Cys107.

The protein belongs to the orthopoxvirus OPG099 family. As to quaternary structure, interacts with OPG086. Component of the entry fusion complex (EFC) composed of OPG053, OPG076, OPG086, OPG094, OPG095, OPG099, OPG107, OPG143, OPG104J5, OPG147 and OPG155. Except for OPG095 and OPG053, each of the EFC proteins is required for assembly or stability of the complex. Post-translationally, most cysteines are linked by disulfide bonds. They are created by the viral disulfide bond formation pathway, a poxvirus-specific redox pathway that operates on the cytoplasmic side of the MV membranes. In terms of processing, unglycosylated because produced in viral factories instead of the classic ER -Golgi route.

Its subcellular location is the virion membrane. Functionally, component of the entry fusion complex (EFC), which consists of 11 proteins. During cell infection, this complex mediates entry of the virion core into the host cytoplasm by a two-step mechanism consisting of lipid mixing of the viral and cellular membranes and subsequent pore formation. This is Entry-fusion complex protein OPG094 (OPG099) from Vaccinia virus (strain Ankara) (VACV).